Reading from the N-terminus, the 143-residue chain is Small ribosomal subunit protein uS12 (143 aa).

Residues Met1–Gln20 show a composition bias toward basic residues. The segment at Met1–Lys28 is disordered. A Hydroxyproline modification is found at Pro62.

The protein belongs to the universal ribosomal protein uS12 family. As to quaternary structure, component of the 40S small ribosomal subunit.

The protein resides in the cytoplasm. The protein localises to the cytosol. It localises to the rough endoplasmic reticulum. In Lumbricus rubellus (Humus earthworm), this protein is Small ribosomal subunit protein uS12 (RPS23).